A 205-amino-acid polypeptide reads, in one-letter code: Troponin I, cardiac muscle (205 aa).

Positions 1–38 (MADQSGNAAPPPVRRRSSANYRAYATEPHAKKKSKISA) are disordered. Position 2 is an N-acetylalanine (Ala-2). Phosphoserine is present on Ser-5. Residues Ser-17 and Ser-18 each carry the phosphoserine; by PKA and PKD/PRKD1 modification. Tyr-21 is modified (phosphotyrosine). Thr-26 carries the phosphothreonine; by STK4/MST1 modification. The interval 27–74 (EPHAKKKSKISASRKLQLKTLMLQIAKQELEREAVERRGEKGRALSTR) is involved in binding TNC. 2 positions are modified to phosphoserine; by PKC/PRKCE: Ser-37 and Ser-39. Phosphothreonine; by STK4/MST1 is present on Thr-46. Position 72 is a phosphoserine (Ser-72). Phosphothreonine is present on Thr-73. The interval 124-145 (NQKIFDLRGKFKRPTLRRVRIS) is involved in binding TNC and actin. Phosphothreonine; by STK4/MST1 is present on Thr-138. Ser-145 is modified (phosphoserine; by PAK3). Thr-176 bears the Phosphothreonine mark. Ser-194 carries the phosphoserine modification.

The protein belongs to the troponin I family. In terms of assembly, binds to actin and tropomyosin. Interacts with TRIM63. Interacts with STK4/MST1. Phosphorylated at Ser-17 and Ser-18 by PRKD1; phosphorylation reduces myofilament calcium sensitivity. Phosphorylated preferentially at Thr-26. Phosphorylation by STK4/MST1 alters its binding affinity to TNNC1 (cardiac Tn-C) and TNNT2 (cardiac Tn-T). Phosphorylated at Ser-37 and Ser-39 by PRKCE; phosphorylation increases myocardium contractile dysfunction.

Its function is as follows. Troponin I is the inhibitory subunit of troponin, the thin filament regulatory complex which confers calcium-sensitivity to striated muscle actomyosin ATPase activity. This chain is Troponin I, cardiac muscle (TNNI3), found in Equus caballus (Horse).